We begin with the raw amino-acid sequence, 506 residues long: 2-isopropylmalate synthase (506 aa).

In terms of domain architecture, Pyruvate carboxyltransferase spans 4 to 266 (ILFMDTTLRD…EPSITLKEIK (263 aa)). Mn(2+) is bound by residues Asp-13, His-201, His-203, and Asn-237. A regulatory domain region spans residues 390–506 (NITQLQVHFV…KLKSFIQLVK (117 aa)).

Belongs to the alpha-IPM synthase/homocitrate synthase family. LeuA type 1 subfamily. Homodimer. Mn(2+) serves as cofactor.

It is found in the cytoplasm. It catalyses the reaction 3-methyl-2-oxobutanoate + acetyl-CoA + H2O = (2S)-2-isopropylmalate + CoA + H(+). Its pathway is amino-acid biosynthesis; L-leucine biosynthesis; L-leucine from 3-methyl-2-oxobutanoate: step 1/4. Catalyzes the condensation of the acetyl group of acetyl-CoA with 3-methyl-2-oxobutanoate (2-ketoisovalerate) to form 3-carboxy-3-hydroxy-4-methylpentanoate (2-isopropylmalate). The protein is 2-isopropylmalate synthase of Bacillus thuringiensis subsp. konkukian (strain 97-27).